Here is a 378-residue protein sequence, read N- to C-terminus: Erythronate-4-phosphate dehydrogenase (378 aa).

Substrate contacts are provided by S45 and T66. NAD(+) is bound by residues D146 and T175. R208 is an active-site residue. NAD(+) is bound at residue D232. E237 is an active-site residue. H254 (proton donor) is an active-site residue. G257 contacts NAD(+). Y258 is a binding site for substrate.

Belongs to the D-isomer specific 2-hydroxyacid dehydrogenase family. PdxB subfamily. As to quaternary structure, homodimer.

The protein localises to the cytoplasm. The catalysed reaction is 4-phospho-D-erythronate + NAD(+) = (R)-3-hydroxy-2-oxo-4-phosphooxybutanoate + NADH + H(+). Its pathway is cofactor biosynthesis; pyridoxine 5'-phosphate biosynthesis; pyridoxine 5'-phosphate from D-erythrose 4-phosphate: step 2/5. In terms of biological role, catalyzes the oxidation of erythronate-4-phosphate to 3-hydroxy-2-oxo-4-phosphonooxybutanoate. In Shigella flexneri serotype 5b (strain 8401), this protein is Erythronate-4-phosphate dehydrogenase.